Reading from the N-terminus, the 465-residue chain is Putative F-box/FBD/LRR-repeat protein At1g22000 (465 aa).

The 47-residue stretch at 28-74 (ETRICALPDDLLLQILPHVPTKEAVATSILSKQWRYVWLMLPKLEFK) folds into the F-box domain. 5 LRR repeats span residues 154-181 (CLTL…SLHY), 182-207 (VVYK…SVHS), 210-230 (DDNL…NYDE), 248-273 (NEVE…HLSE), and 339-365 (ISLV…TIDN). Residues 373-424 (SWNQPSSIPGCLLSHLETFRWRGYGGREDAKKLLMTYILANSKCLKTVEISL) enclose the FBD domain.

The protein is Putative F-box/FBD/LRR-repeat protein At1g22000 of Arabidopsis thaliana (Mouse-ear cress).